A 244-amino-acid chain; its full sequence is Cell division protein ZapD (244 aa).

This sequence belongs to the ZapD family. In terms of assembly, interacts with FtsZ.

The protein resides in the cytoplasm. Functionally, cell division factor that enhances FtsZ-ring assembly. Directly interacts with FtsZ and promotes bundling of FtsZ protofilaments, with a reduction in FtsZ GTPase activity. The protein is Cell division protein ZapD of Shewanella oneidensis (strain ATCC 700550 / JCM 31522 / CIP 106686 / LMG 19005 / NCIMB 14063 / MR-1).